Reading from the N-terminus, the 555-residue chain is GPI-anchor transamidase component PIGS (555 aa).

Residues Ala2–Arg18 lie on the Cytoplasmic side of the membrane. A cardiolipin is bound by residues Arg15 and Arg18. Residues Ser19–Thr39 form a helical membrane-spanning segment. Residues Glu40–Gln517 lie on the Lumenal side of the membrane. Asn267 and Asn370 each carry an N-linked (GlcNAc...) asparagine glycan. A helical transmembrane segment spans residues Lys518–Pro532. Residues Ile533–Asp555 lie on the Cytoplasmic side of the membrane.

This sequence belongs to the PIGS family. Heteropentamer. Part of the GPI-anchor transamidase complex, consisting of PIGK, PIGT, PIGS, PIGU and GAA1.

It is found in the endoplasmic reticulum membrane. Its pathway is glycolipid biosynthesis; glycosylphosphatidylinositol-anchor biosynthesis. In terms of biological role, component of the glycosylphosphatidylinositol-anchor (GPI-anchor) transamidase (GPI-T) complex that catalyzes the formation of the linkage between a proprotein and a GPI-anchor and participates in GPI anchored protein biosynthesis. The protein is GPI-anchor transamidase component PIGS of Mus musculus (Mouse).